The chain runs to 1690 residues: rRNA biogenesis protein rrp5 (1690 aa).

Disordered regions lie at residues 1 to 42 (MAGN…GASS) and 59 to 90 (FMESASGTAELSKKTRPKKKGSKKSSKSELDN). Residues 11–32 (ASEGSDSQGNERISSLSANEAT) show a composition bias toward polar residues. Over residues 72–83 (KTRPKKKGSKKS) the composition is skewed to basic residues. 13 consecutive S1 motif domains span residues 109–209 (GSLI…LSLK), 226–289 (GSMI…LTAT), 306–376 (GDYI…VSFL), 398–473 (GFIV…LSFQ), 490–559 (GQFV…LTLK), 579–648 (GTQT…VGCR), 666–739 (GSVL…LSLK), 761–830 (GIKY…MSFK), 866–942 (GKIT…ISHR), 973–1044 (GDEV…IGPL), 1053–1122 (GSRL…LSAR), 1147–1216 (GDIC…MSLK), and 1236–1307 (GSNL…LGLK). The segment at 1313-1424 (SDSDISMSDN…EEKDLDEIPS (112 aa)) is disordered. Acidic residues-rich tracts occupy residues 1348–1367 (QSEEVENLESAGDEDEEEEP), 1390–1400 (DTEDSEDEEDE), and 1412–1421 (FDDEEKDLDE). A Phosphothreonine modification is found at T1391. S1394 bears the Phosphoserine mark. HAT repeat units follow at residues 1420–1452 (DEIPSTAADFERQLLSSPNSSLLWISYMAYHLN), 1526–1558 (GKVDLADEYMQLMLKNFKQVPSVWIQYATFLLN), and 1596–1628 (GDPERGRTIFEGLLSSYPKRLDLWNVLIDMEMK). S1684 and S1686 each carry phosphoserine.

In terms of assembly, component of the ribosomal small subunit (SSU) processome.

It is found in the nucleus. The protein resides in the nucleolus. Functionally, involved in the biogenesis of rRNA. Required for the formation of 18S and 5.8S rRNA. The sequence is that of rRNA biogenesis protein rrp5 from Schizosaccharomyces pombe (strain 972 / ATCC 24843) (Fission yeast).